We begin with the raw amino-acid sequence, 453 residues long: GTPase Der (453 aa).

2 consecutive EngA-type G domains span residues 4 to 169 (PIVA…PTQG) and 177 to 352 (TKIA…NEYQ). Residues 10–17 (GRPNVGKS), 57–61 (DTGGL), 120–123 (NKCE), 183–190 (GRPNVGKS), 230–234 (DTAGI), and 295–298 (NKWD) each bind GTP. The 86-residue stretch at 353–438 (RRVTTSVINE…PIRLLWRGKK (86 aa)) folds into the KH-like domain.

Belongs to the TRAFAC class TrmE-Era-EngA-EngB-Septin-like GTPase superfamily. EngA (Der) GTPase family. As to quaternary structure, associates with the 50S ribosomal subunit.

In terms of biological role, GTPase that plays an essential role in the late steps of ribosome biogenesis. The polypeptide is GTPase Der (Trichodesmium erythraeum (strain IMS101)).